The chain runs to 309 residues: tRNA uridine(34) hydroxylase (309 aa).

Residues 126–220 enclose the Rhodanese domain; sequence SDPEVIVIDT…YLEQIPPEES (95 aa). The active-site Cysteine persulfide intermediate is the Cys-180.

This sequence belongs to the TrhO family.

It catalyses the reaction uridine(34) in tRNA + AH2 + O2 = 5-hydroxyuridine(34) in tRNA + A + H2O. Catalyzes oxygen-dependent 5-hydroxyuridine (ho5U) modification at position 34 in tRNAs. This chain is tRNA uridine(34) hydroxylase, found in Nostoc sp. (strain PCC 7120 / SAG 25.82 / UTEX 2576).